Reading from the N-terminus, the 217-residue chain is MRKRISAIIMTLFMVFMSCNNGGPELKSDEVAKSDGTVLDLAKVSKKIKEASAFAASVKEVETLVKSVDELAKAIGKKIKNDGTLEFADADKDKNGSLIAGAFQIILIAEGKLKGLDKEAGISEALKAKVTDAEAKSKAFLAKVKGQTATLGKNDASDDDTKKAIKKDNSDKTKGASELEALNTAVDALLKAAEGEVEAAIKELTAPVKAEKPSQNN.

The N-terminal stretch at 1 to 18 (MRKRISAIIMTLFMVFMS) is a signal peptide. Residue Cys-19 is the site of N-palmitoyl cysteine attachment. Cys-19 carries S-diacylglycerol cysteine lipidation. The segment at 151-174 (LGKNDASDDDTKKAIKKDNSDKTK) is disordered. Over residues 155–174 (DASDDDTKKAIKKDNSDKTK) the composition is skewed to basic and acidic residues.

This sequence belongs to the variable small protein (Vsp) family.

The protein resides in the cell outer membrane. Its function is as follows. The Vlp and Vsp proteins are antigenically distinct proteins, only one vlp or vsp gene is transcriptionally active at any one time. Switching between these genes is a mechanism of host immune response evasion. In Borrelia hermsii, this protein is Variable small protein 22.